Here is a 319-residue protein sequence, read N- to C-terminus: Formimidoylglutamase (319 aa).

Mn(2+)-binding residues include His-131, Asp-154, His-156, Asp-158, Cys-248, and Asp-250.

It belongs to the arginase family. Requires Mn(2+) as cofactor.

The enzyme catalyses N-formimidoyl-L-glutamate + H2O = formamide + L-glutamate. It participates in amino-acid degradation; L-histidine degradation into L-glutamate; L-glutamate from N-formimidoyl-L-glutamate (hydrolase route): step 1/1. Catalyzes the conversion of N-formimidoyl-L-glutamate to L-glutamate and formamide. This chain is Formimidoylglutamase, found in Legionella pneumophila (strain Paris).